Here is a 144-residue protein sequence, read N- to C-terminus: Large ribosomal subunit protein uL15 (144 aa).

Positions Met-1–Gly-53 are disordered. Over residues Arg-21–Gly-31 the composition is skewed to gly residues.

It belongs to the universal ribosomal protein uL15 family. Part of the 50S ribosomal subunit.

Functionally, binds to the 23S rRNA. The chain is Large ribosomal subunit protein uL15 from Glaesserella parasuis serovar 5 (strain SH0165) (Haemophilus parasuis).